The sequence spans 248 residues: Probable transcriptional regulatory protein Atu3727 (248 aa).

Residues 1–21 (MAGHSQFKNIMHRKGKQDSVR) form a disordered region.

Belongs to the TACO1 family.

It localises to the cytoplasm. This is Probable transcriptional regulatory protein Atu3727 from Agrobacterium fabrum (strain C58 / ATCC 33970) (Agrobacterium tumefaciens (strain C58)).